The following is a 503-amino-acid chain: Glutamate--tRNA ligase (503 aa).

The 'HIGH' region signature appears at P14 to G24. A 'KMSKS' region motif is present at residues K261–R265. Residue K264 coordinates ATP.

The protein belongs to the class-I aminoacyl-tRNA synthetase family. Glutamate--tRNA ligase type 1 subfamily. In terms of assembly, monomer.

It localises to the cytoplasm. The catalysed reaction is tRNA(Glu) + L-glutamate + ATP = L-glutamyl-tRNA(Glu) + AMP + diphosphate. Its function is as follows. Catalyzes the attachment of glutamate to tRNA(Glu) in a two-step reaction: glutamate is first activated by ATP to form Glu-AMP and then transferred to the acceptor end of tRNA(Glu). This is Glutamate--tRNA ligase from Chloroflexus aurantiacus (strain ATCC 29366 / DSM 635 / J-10-fl).